Here is an 804-residue protein sequence, read N- to C-terminus: MKRKERRINKDFGYNRKCVCHYEASQKRFCYSQYSCASVLYERVRDIAKIMDRLDSGLDAWCLRDAIISVLRATHCVPRVDRMLGRWYLKTSIFYDFCPDDLILSCPNVIMPNVLNFVKKYRDFIRSVLYKVSVSWKNQYMPGVLGASRFLEEISNSLNGVEESIPCIYLRMCATLTEIVLRNGYLREIYQENPYVIFEELAFSLFTQKWVLPFSCMTNLGLVEKANSTVFDVAIYNTCLYSLADFITVNGEHLFPALLNGSNISMNVTRYQQEAKNIFEILLSQIQVVERDTDKTVQLTVYVEVWHVSALTWLDLYQVLPETSRVTFCLIIPGIFMDRYELKRAQWSLFHKNIAFELGKCDEVTFSTKYLEFERTTDHAKITMASFVEKICRCLKRGRMGLIFRKNVYQYSMIPHVPLYCGGDFLDVLPVRDGINTCLRMLLNVVHFLGDEVSDELTEEIDFVRLQCKFFMFNELRRVVRKMVLVANAVIDYAVDNKDFLREGIVDGRSLGICITGLHSVFMTVGLSYAHPDACRLYRMMCEHIYYTCVRTSVDCCMKGAEPCNLFDRSKYALGMLYFDQFDNVECTLPEELWTTLRKDVLMHGVRNIHFTAGTAMQKEFDIINSSESFWPMEDNKILRRSNIKVVIGKDGLNDVTSVYSSELKSLYIPVYNNLLLNRFNKHQQYLKTVGYRVLNVDTNLFTDKELDDLAVFKDGFSYPLNDLIEMYKSGLPFLDQGQANVFYFNDTVSLKHLLPLLYKTGFKVAMYKVLCSSEMYKHLDLSNPLPLIGKCSDGVVMHVKNIL.

It belongs to the ribonucleoside diphosphate reductase large chain family. The genome of human herpesvirus-6 does not code for a ribonucleotide reductase small subunit.

Its subcellular location is the virion. It is found in the host cytoplasm. Does not possess a ribonucleotide reductase activity. Betaherpesviruses probably use another strategy to expand the dNTP pool in a quiescent host cell. The sequence is that of Ribonucleoside-diphosphate reductase large subunit-like protein from Human herpesvirus 6B (strain Z29) (HHV-6 variant B).